The chain runs to 140 residues: Large-conductance mechanosensitive channel (140 aa).

The next 2 helical transmembrane spans lie at 14-34 (VMDL…TGSL) and 85-105 (GAFV…FLLV).

The protein belongs to the MscL family. As to quaternary structure, homopentamer.

The protein resides in the cell inner membrane. Channel that opens in response to stretch forces in the membrane lipid bilayer. May participate in the regulation of osmotic pressure changes within the cell. The protein is Large-conductance mechanosensitive channel of Sphingopyxis alaskensis (strain DSM 13593 / LMG 18877 / RB2256) (Sphingomonas alaskensis).